Here is a 436-residue protein sequence, read N- to C-terminus: Chromosomal replication initiator protein DnaA (436 aa).

Residues 1 to 69 (MSIFTKIKKS…SELYEKETGI (69 aa)) form a domain I, interacts with DnaA modulators region. Positions 69-97 (IKPKIDIVTKEISHRPLTIEEIIEPTTPS) are domain II. Residues 98–311 (VLIPEYTFES…GMITKINAMS (214 aa)) are domain III, AAA+ region. Residues Gly142, Gly144, Lys145, and Thr146 each coordinate ATP. The segment at 312 to 436 (KILGISEITL…KNKIQIKKSE (125 aa)) is domain IV, binds dsDNA.

This sequence belongs to the DnaA family. In terms of assembly, oligomerizes as a right-handed, spiral filament on DNA at oriC.

Its subcellular location is the cytoplasm. In terms of biological role, plays an essential role in the initiation and regulation of chromosomal replication. ATP-DnaA binds to the origin of replication (oriC) to initiate formation of the DNA replication initiation complex once per cell cycle. Binds the DnaA box (a 9 base pair repeat at the origin) and separates the double-stranded (ds)DNA. Forms a right-handed helical filament on oriC DNA; dsDNA binds to the exterior of the filament while single-stranded (ss)DNA is stabiized in the filament's interior. The ATP-DnaA-oriC complex binds and stabilizes one strand of the AT-rich DNA unwinding element (DUE), permitting loading of DNA polymerase. After initiation quickly degrades to an ADP-DnaA complex that is not apt for DNA replication. Binds acidic phospholipids. This chain is Chromosomal replication initiator protein DnaA, found in Nautilia profundicola (strain ATCC BAA-1463 / DSM 18972 / AmH).